The chain runs to 532 residues: Alkaline phosphatase (532 aa).

The tract at residues 1-20 (MASERDPLLPVHGEGPESPS) is disordered. A helical; Signal-anchor for type II membrane protein membrane pass occupies residues 27–47 (WIKHGILLILVLSTVIFFYFF). Asp68 contacts Mg(2+). Asp68 is a binding site for Zn(2+). Residue Ser115 is the Phosphoserine intermediate of the active site. Mg(2+)-binding residues include Asp166, Thr168, and Glu306. Zn(2+)-binding residues include Asp311, His315, Asp352, His353, and His456.

This sequence belongs to the alkaline phosphatase family. The cofactor is Mg(2+). Zn(2+) is required as a cofactor.

The protein localises to the membrane. The catalysed reaction is a phosphate monoester + H2O = an alcohol + phosphate. The protein is Alkaline phosphatase of Schizosaccharomyces pombe (strain 972 / ATCC 24843) (Fission yeast).